The primary structure comprises 186 residues: MYYNPFSPQCYYYVTVPMYNDGRSVYWTIPNEMEKVHRGADLRSSYEDRNLLLKDYGPKPFVVNINRATKQNNTFRTALWTGKHFQVTLMSLGIGEDIGLEIHPNVDQFLRIEQGRGIVKMGKSKDHLNFQRNVYDDSAIVVPAGTWHNVINTGNTPLKLYSIYAPPNHPFGTVHETKADAVAAED.

Residues 89-164 enclose the Cupin type-2 domain; it reads LMSLGIGEDI…NTPLKLYSIY (76 aa). Residue 117–124 participates in ATP binding; that stretch reads GIVKMGKS.

This is an uncharacterized protein from Bacillus subtilis (strain 168).